The primary structure comprises 444 residues: Tubulin beta chain (444 aa).

Glutamine 11, glutamate 69, serine 138, glycine 142, threonine 143, glycine 144, asparagine 204, and asparagine 226 together coordinate GTP. Glutamate 69 contributes to the Mg(2+) binding site. The disordered stretch occupies residues 423–444; it reads QQYQDATAEEEGEFDDEEEMDV. The segment covering 429-444 has biased composition (acidic residues); the sequence is TAEEEGEFDDEEEMDV.

This sequence belongs to the tubulin family. As to quaternary structure, dimer of alpha and beta chains. A typical microtubule is a hollow water-filled tube with an outer diameter of 25 nm and an inner diameter of 15 nM. Alpha-beta heterodimers associate head-to-tail to form protofilaments running lengthwise along the microtubule wall with the beta-tubulin subunit facing the microtubule plus end conferring a structural polarity. Microtubules usually have 13 protofilaments but different protofilament numbers can be found in some organisms and specialized cells. Mg(2+) serves as cofactor.

It is found in the cytoplasm. The protein localises to the cytoskeleton. In terms of biological role, tubulin is the major constituent of microtubules, a cylinder consisting of laterally associated linear protofilaments composed of alpha- and beta-tubulin heterodimers. Microtubules grow by the addition of GTP-tubulin dimers to the microtubule end, where a stabilizing cap forms. Below the cap, tubulin dimers are in GDP-bound state, owing to GTPase activity of alpha-tubulin. This chain is Tubulin beta chain, found in Euplotes focardii.